Here is a 218-residue protein sequence, read N- to C-terminus: Ras-related protein Rab-42 (218 aa).

Residues Ala-19, Gly-21, Lys-22, Thr-23, and Thr-46 each contribute to the GTP site. Positions 23, 46, and 70 each coordinate Mg(2+). GTP is bound by residues Gly-73, Lys-130, Asp-132, Val-160, and Lys-161. Residues Cys-216 and Cys-218 are each lipidated (S-geranylgeranyl cysteine).

This sequence belongs to the small GTPase superfamily. Rab family. Mg(2+) serves as cofactor.

It is found in the membrane. The catalysed reaction is GTP + H2O = GDP + phosphate + H(+). Its activity is regulated as follows. Regulated by guanine nucleotide exchange factors (GEFs) which promote the exchange of bound GDP for free GTP. Regulated by GTPase activating proteins (GAPs) which increase the GTP hydrolysis activity. Inhibited by GDP dissociation inhibitors (GDIs). Its function is as follows. The small GTPases Rab are key regulators of intracellular membrane trafficking, from the formation of transport vesicles to their fusion with membranes. Rabs cycle between an inactive GDP-bound form and an active GTP-bound form that is able to recruit to membranes different sets of downstream effectors directly responsible for vesicle formation, movement, tethering and fusion. The physiological function of RAB42 remains undefined. This chain is Ras-related protein Rab-42, found in Homo sapiens (Human).